The following is a 347-amino-acid chain: Anthranilate phosphoribosyltransferase (347 aa).

5-phospho-alpha-D-ribose 1-diphosphate is bound by residues glycine 88, 91 to 92 (GD), threonine 96, 98 to 101 (NIST), 116 to 124 (KHGNRSVSS), and serine 128. Glycine 88 contributes to the anthranilate binding site. Serine 100 provides a ligand contact to Mg(2+). Residue asparagine 119 participates in anthranilate binding. Position 174 (arginine 174) interacts with anthranilate. Positions 232 and 233 each coordinate Mg(2+).

It belongs to the anthranilate phosphoribosyltransferase family. Homodimer. Mg(2+) serves as cofactor.

It catalyses the reaction N-(5-phospho-beta-D-ribosyl)anthranilate + diphosphate = 5-phospho-alpha-D-ribose 1-diphosphate + anthranilate. It functions in the pathway amino-acid biosynthesis; L-tryptophan biosynthesis; L-tryptophan from chorismate: step 2/5. Its function is as follows. Catalyzes the transfer of the phosphoribosyl group of 5-phosphorylribose-1-pyrophosphate (PRPP) to anthranilate to yield N-(5'-phosphoribosyl)-anthranilate (PRA). In Shewanella sp. (strain MR-4), this protein is Anthranilate phosphoribosyltransferase.